The chain runs to 320 residues: Ferrochelatase (320 aa).

Fe cation contacts are provided by H194 and E275.

This sequence belongs to the ferrochelatase family.

The protein resides in the cytoplasm. The enzyme catalyses heme b + 2 H(+) = protoporphyrin IX + Fe(2+). It functions in the pathway porphyrin-containing compound metabolism; protoheme biosynthesis; protoheme from protoporphyrin-IX: step 1/1. Catalyzes the ferrous insertion into protoporphyrin IX. In Xylella fastidiosa (strain M12), this protein is Ferrochelatase.